The following is an 877-amino-acid chain: Leucine--tRNA ligase (877 aa).

A 'HIGH' region motif is present at residues P43–H53. The short motif at K628–S632 is the 'KMSKS' region element. K631 provides a ligand contact to ATP.

Belongs to the class-I aminoacyl-tRNA synthetase family.

Its subcellular location is the cytoplasm. It catalyses the reaction tRNA(Leu) + L-leucine + ATP = L-leucyl-tRNA(Leu) + AMP + diphosphate. The sequence is that of Leucine--tRNA ligase from Brucella anthropi (strain ATCC 49188 / DSM 6882 / CCUG 24695 / JCM 21032 / LMG 3331 / NBRC 15819 / NCTC 12168 / Alc 37) (Ochrobactrum anthropi).